Here is a 406-residue protein sequence, read N- to C-terminus: 5-cytosine rRNA methyltransferase NSUN4 (406 aa).

Residues glycine 207, glycine 208, lysine 209, aspartate 226, arginine 231, aspartate 259, glycine 260, and aspartate 277 each coordinate S-adenosyl-L-methionine. Cysteine 332 (nucleophile) is an active-site residue.

This sequence belongs to the class I-like SAM-binding methyltransferase superfamily. RsmB/NOP family.

It localises to the mitochondrion. It carries out the reaction a cytidine in rRNA + S-adenosyl-L-methionine = a 5-methylcytidine in rRNA + S-adenosyl-L-homocysteine + H(+). The catalysed reaction is a cytidine in mRNA + S-adenosyl-L-methionine = a 5-methylcytidine in mRNA + S-adenosyl-L-homocysteine + H(+). Involved in mitochondrial ribosome large subunit biogenesis. Functionally, mitochondrial RNA cytosine C(5)-methyltransferase that methylates cytosine to 5-methylcytosine (m5C) in various RNAs, such as rRNAs, mRNAs and some long non-coding RNAs (lncRNAs). Involved in mitochondrial ribosome small subunit (SSU) maturation by catalyzing methylation of mitochondrial 12S rRNA. This is 5-cytosine rRNA methyltransferase NSUN4 (nsun4) from Xenopus tropicalis (Western clawed frog).